Consider the following 1056-residue polypeptide: Carbamoyl phosphate synthase large chain (1056 aa).

A carboxyphosphate synthetic domain region spans residues 1–398 (MPRDPSIKKV…AFLKALRSLD (398 aa)). Residues Arg127, Arg167, Gly173, Gly174, Glu206, Val208, Glu213, Gly239, Val240, His241, Gln282, and Glu295 each contribute to the ATP site. An ATP-grasp 1 domain is found at 131–324 (RDLMNRIGEP…IARVASKIAI (194 aa)). Mg(2+) contacts are provided by Gln282, Glu295, and Asn297. Residues Gln282, Glu295, and Asn297 each contribute to the Mn(2+) site. Residues 399 to 532 (TDVEHHTVLS…STYGDKVCEV (134 aa)) form an oligomerization domain region. The carbamoyl phosphate synthetic domain stretch occupies residues 533–921 (THSDRKKVMI…YKASIAAHNR (389 aa)). An ATP-grasp 2 domain is found at 663-854 (SVLLDSLSIP…LAKIAARVMM (192 aa)). Residues Arg699, Arg738, Leu740, Glu745, Gly770, Val771, His772, Ser773, Gln813, and Glu825 each contribute to the ATP site. Residues Gln813, Glu825, and Asn827 each contribute to the Mg(2+) site. Residues Gln813, Glu825, and Asn827 each contribute to the Mn(2+) site. Residues 920 to 1056 (NRLPKSGNVF…IEPLQHYIGR (137 aa)) form the MGS-like domain. Residues 922 to 1056 (LPKSGNVFIS…IEPLQHYIGR (135 aa)) are allosteric domain.

Belongs to the CarB family. Composed of two chains; the small (or glutamine) chain promotes the hydrolysis of glutamine to ammonia, which is used by the large (or ammonia) chain to synthesize carbamoyl phosphate. Tetramer of heterodimers (alpha,beta)4. Requires Mg(2+) as cofactor. It depends on Mn(2+) as a cofactor.

It catalyses the reaction hydrogencarbonate + L-glutamine + 2 ATP + H2O = carbamoyl phosphate + L-glutamate + 2 ADP + phosphate + 2 H(+). The catalysed reaction is hydrogencarbonate + NH4(+) + 2 ATP = carbamoyl phosphate + 2 ADP + phosphate + 2 H(+). Its pathway is amino-acid biosynthesis; L-arginine biosynthesis; carbamoyl phosphate from bicarbonate: step 1/1. The protein operates within pyrimidine metabolism; UMP biosynthesis via de novo pathway; (S)-dihydroorotate from bicarbonate: step 1/3. Its function is as follows. Large subunit of the glutamine-dependent carbamoyl phosphate synthetase (CPSase). CPSase catalyzes the formation of carbamoyl phosphate from the ammonia moiety of glutamine, carbonate, and phosphate donated by ATP, constituting the first step of 2 biosynthetic pathways, one leading to arginine and/or urea and the other to pyrimidine nucleotides. The large subunit (synthetase) binds the substrates ammonia (free or transferred from glutamine from the small subunit), hydrogencarbonate and ATP and carries out an ATP-coupled ligase reaction, activating hydrogencarbonate by forming carboxy phosphate which reacts with ammonia to form carbamoyl phosphate. The sequence is that of Carbamoyl phosphate synthase large chain from Methanospirillum hungatei JF-1 (strain ATCC 27890 / DSM 864 / NBRC 100397 / JF-1).